The primary structure comprises 234 residues: tRNA (guanine-N(1)-)-methyltransferase (234 aa).

S-adenosyl-L-methionine is bound by residues Gly110 and Ile134–Leu139.

It belongs to the RNA methyltransferase TrmD family. Homodimer.

It localises to the cytoplasm. It catalyses the reaction guanosine(37) in tRNA + S-adenosyl-L-methionine = N(1)-methylguanosine(37) in tRNA + S-adenosyl-L-homocysteine + H(+). In terms of biological role, specifically methylates guanosine-37 in various tRNAs. This chain is tRNA (guanine-N(1)-)-methyltransferase, found in Tropheryma whipplei (strain Twist) (Whipple's bacillus).